A 153-amino-acid polypeptide reads, in one-letter code: MKLRVLWVGKTQEEWVRRGIDEYAGRVRRYAPLEIGEARDEKGAAAEAMRARECERLDKLVPRTSRLILLDERGDQLTSPEFAAYISRCRDTAVPELAFAIGGAYGFADEFRRRADRVIALSRMTFTHQMVRVVLLEQIYRAFTIIGNEPYHH.

Residues Leu70, Gly102, and 121–126 (LSRMTF) each bind S-adenosyl-L-methionine.

It belongs to the RNA methyltransferase RlmH family. In terms of assembly, homodimer.

The protein resides in the cytoplasm. It carries out the reaction pseudouridine(1915) in 23S rRNA + S-adenosyl-L-methionine = N(3)-methylpseudouridine(1915) in 23S rRNA + S-adenosyl-L-homocysteine + H(+). Its function is as follows. Specifically methylates the pseudouridine at position 1915 (m3Psi1915) in 23S rRNA. The sequence is that of Ribosomal RNA large subunit methyltransferase H from Geobacter sulfurreducens (strain ATCC 51573 / DSM 12127 / PCA).